A 264-amino-acid polypeptide reads, in one-letter code: Shikimate dehydrogenase (NADP(+)) (264 aa).

Residues 14 to 16 (SVS) and T61 contribute to the shikimate site. K65 acts as the Proton acceptor in catalysis. Shikimate contacts are provided by N85 and D99. Residues 122-126 (GAGGA), 145-150 (NRTVSR), and A208 each bind NADP(+). Y210 provides a ligand contact to shikimate. G231 serves as a coordination point for NADP(+).

This sequence belongs to the shikimate dehydrogenase family. Homodimer.

The enzyme catalyses shikimate + NADP(+) = 3-dehydroshikimate + NADPH + H(+). Its pathway is metabolic intermediate biosynthesis; chorismate biosynthesis; chorismate from D-erythrose 4-phosphate and phosphoenolpyruvate: step 4/7. Its function is as follows. Involved in the biosynthesis of the chorismate, which leads to the biosynthesis of aromatic amino acids. Catalyzes the reversible NADPH linked reduction of 3-dehydroshikimate (DHSA) to yield shikimate (SA). The sequence is that of Shikimate dehydrogenase (NADP(+)) from Natronomonas pharaonis (strain ATCC 35678 / DSM 2160 / CIP 103997 / JCM 8858 / NBRC 14720 / NCIMB 2260 / Gabara) (Halobacterium pharaonis).